Here is a 635-residue protein sequence, read N- to C-terminus: MDISDEESEISESEIEEYSKTPYHLLRSETYYKVKVNGRLRCPFCVGKKKQDYKYKELHAHATGVSKGSATRSALQKSNHLALAKFLENDLAGYAEPLPRPPVVPPLLDETEPNPHNVYVWPWMGIVVNPLKETDDKELLLDSVYWLQTLSKFKPVEVNAFWVEQDSIVGVIAKFDSDWSGFAAATELEKEFETQGSCKKEWTERSGDSESKAYGWCARADDFQSQGPIGEYLSKEGTLRTVSDILQNNVQDRNTLLDVLSNMIDMTNEDLNKAQHSYNRTAMSLQRVLDEKKNLHQAFAEETKKMQQMSLRHIQRILYDKEKLRNELDRKMRDLESRAKQLEKHEALTELERQKLDEDKRKSDAMNKSLQLASREQKKADESVLRLVEEHQRQKEDALNKILLLEKQLDTKQTLEMEIQELKGKLQVMKHLGDDDDEAVQTKMKEMNDELDDKKAELEDLESMNSVLMTKERQSNDEIQAARQKMIAGLTGLLGAESDIGVKRMGELDEKPFLDVCKLRYSANEARVEAATLCSTWKENLKNPSWQPFKREGTGDGAEEVVDEDDEQLKKLKREWGKEVHNAVKAALVEMNEYNASGRYPTSELWNFKEGRKATLKEVITFISTDIKNLKRKRT.

Positions 289–471 (LDEKKNLHQA…ESMNSVLMTK (183 aa)) form a coiled coil. Residues 350 to 365 (ELERQKLDEDKRKSDA) are compositionally biased toward basic and acidic residues. The disordered stretch occupies residues 350–376 (ELERQKLDEDKRKSDAMNKSLQLASRE).

As to quaternary structure, forms a complex with IDN2 and FMD1/INDL1. Highly expressed in flowers and at lower levels in roots, leaves and stems.

Its function is as follows. Forms a complex with IDN2 and FDM1/IDNL1 that is required for RNA-directed DNA methylation (RdDM) and that functions at a downstream step of the RdDM pathway. The chain is Factor of DNA methylation 2 from Arabidopsis thaliana (Mouse-ear cress).